Consider the following 465-residue polypeptide: Probable oxidoreductase AIM17 (465 aa).

A mitochondrion-targeting transit peptide spans 1–16; the sequence is MLRSNLCRGSRILARL. Residues H246, D248, and H428 each coordinate Fe cation.

The protein belongs to the gamma-BBH/TMLD family. It depends on Fe(2+) as a cofactor. L-ascorbate serves as cofactor.

It is found in the mitochondrion. This Saccharomyces cerevisiae (strain ATCC 204508 / S288c) (Baker's yeast) protein is Probable oxidoreductase AIM17 (AIM17).